Reading from the N-terminus, the 217-residue chain is Casparian strip membrane protein 6 (217 aa).

The Cytoplasmic portion of the chain corresponds to 1–57; sequence MEEAKHIEAVEAKQIEAEEAQRIKAGEAKQIEAGETSRSSRKVITFEPKLVINKGIS. The chain crosses the membrane as a helical span at residues 58–78; it reads VLGFVLRLFAVFGTIGSALAM. Over 79 to 103 the chain is Extracellular; the sequence is GTTHESVVSLSQLVLLKVKYSDLPT. A helical membrane pass occupies residues 104 to 124; it reads LMFFVVANAIAGGYLVLSLPV. Residues 125–138 lie on the Cytoplasmic side of the membrane; it reads SIFHIFSTKAKTSR. Residues 139-159 form a helical membrane-spanning segment; it reads IILLVIDTVMLALVSSGASAA. The Extracellular portion of the chain corresponds to 160–191; it reads TATVYLAHEGNTTANWPPICQQFDGFCERISG. An N-linked (GlcNAc...) asparagine glycan is attached at Asn-170. The helical transmembrane segment at 192 to 212 threads the bilayer; that stretch reads SLIGSFCAVILLMLIVINSAI. Residues 213–217 lie on the Cytoplasmic side of the membrane; that stretch reads SLSRH.

Belongs to the Casparian strip membrane proteins (CASP) family. As to quaternary structure, homodimer and heterodimers.

It is found in the cell membrane. Regulates membrane-cell wall junctions and localized cell wall deposition. Required for establishment of the Casparian strip membrane domain (CSD) and the subsequent formation of Casparian strips, a cell wall modification of the root endodermis that determines an apoplastic barrier between the intraorganismal apoplasm and the extraorganismal apoplasm and prevents lateral diffusion. In Arabidopsis lyrata subsp. lyrata (Lyre-leaved rock-cress), this protein is Casparian strip membrane protein 6.